A 325-amino-acid polypeptide reads, in one-letter code: MSDFKTIQFVSVVIPVYNEQDSLSELLKRTIAACDSMGKQYEIVLVDDGSSDRSAEILREAAQRPGSRVVAVLLNRNYGQHSAIMAGFNHIKGDLVITLDADLQNPPEEIPRLVEAADQGYDVVGTIRQDRQDSWFRRRASRLINGLIQRTTGKSMSDYGCMLRAYRSSVIKAMLHCHERSTFIPILANSFARRTIEIPVKHAEREHGESKYGLMKLINLMYDLVTCLTTTPLRALSIFGSVVALLGFAFAVLLILMRLTLGPQWAAEGVFTLFAVLFIFIGAQFVGMGLLGEYIGRIYNDVRARPRYFIQNVVRANQPDEEQEK.

2 helical membrane passes run 236-256 and 270-290; these read LSIF…LLIL and VFTL…GMGL.

This sequence belongs to the glycosyltransferase 2 family.

The protein resides in the cell inner membrane. It carries out the reaction UDP-4-deoxy-4-formamido-beta-L-arabinose + di-trans,octa-cis-undecaprenyl phosphate = 4-deoxy-4-formamido-alpha-L-arabinopyranosyl di-trans,octa-cis-undecaprenyl phosphate + UDP. The protein operates within glycolipid biosynthesis; 4-amino-4-deoxy-alpha-L-arabinose undecaprenyl phosphate biosynthesis; 4-amino-4-deoxy-alpha-L-arabinose undecaprenyl phosphate from UDP-4-deoxy-4-formamido-beta-L-arabinose and undecaprenyl phosphate: step 1/2. It functions in the pathway bacterial outer membrane biogenesis; lipopolysaccharide biosynthesis. In terms of biological role, catalyzes the transfer of 4-deoxy-4-formamido-L-arabinose from UDP to undecaprenyl phosphate. The modified arabinose is attached to lipid A and is required for resistance to polymyxin and cationic antimicrobial peptides. This chain is Undecaprenyl-phosphate 4-deoxy-4-formamido-L-arabinose transferase, found in Edwardsiella ictaluri (strain 93-146).